Consider the following 1399-residue polypeptide: Alpha-glucan water dikinase 1, chloroplastic (1399 aa).

A chloroplast-targeting transit peptide spans 1–75 (MSNSVVHNLL…GRPLSFVPRA (75 aa)). At Val76 the chain carries N-acetylvaline. The interval 265–306 (LLKKDNSNESPKSNGTSSSGREEKKKVSKQPERKKNYNTDKI) is disordered. The span at 272 to 283 (NESPKSNGTSSS) shows a compositional bias: polar residues. Positions 284–306 (GREEKKKVSKQPERKKNYNTDKI) are enriched in basic and acidic residues. The active-site Tele-phosphohistidine intermediate is His1004.

The protein belongs to the PEP-utilizing enzyme family. Homodimer. It depends on Mg(2+) as a cofactor.

It is found in the plastid. The protein localises to the chloroplast. It catalyses the reaction [(1-&gt;4)-alpha-D-glucosyl](n) + n ATP + n H2O = [(1-&gt;4)-6-phospho-alpha-D-glucosyl](n) + n AMP + n phosphate + 2n H(+). Its function is as follows. Mediates the incorporation of phosphate into starch-like alpha-glucan, mostly at the C-6 position of glucose units. Acts as an overall regulator of starch mobilization. Required for starch degradation, suggesting that the phosphate content of starch regulates its degradability. The protein is Alpha-glucan water dikinase 1, chloroplastic of Arabidopsis thaliana (Mouse-ear cress).